The chain runs to 428 residues: Aerobic C4-dicarboxylate transport protein (428 aa).

9 helical membrane-spanning segments follow: residues 5-27 (LFKS…GHYY), 47-64 (MIIA…IAGM), 77-99 (ALLY…VNVV), 141-163 (VIGA…FGFA), 184-206 (VIFG…AMAF), 216-238 (LVQL…VVVL), 289-311 (VVGL…YLTM), 326-348 (IFHQ…GVTG), and 353-375 (VLAA…ILGI).

The protein belongs to the dicarboxylate/amino acid:cation symporter (DAACS) (TC 2.A.23) family.

The protein localises to the cell inner membrane. Its function is as follows. Responsible for the transport of dicarboxylates such as succinate, fumarate, and malate from the periplasm across the membrane. This Salmonella typhi protein is Aerobic C4-dicarboxylate transport protein.